The following is a 339-amino-acid chain: UDP-N-acetylenolpyruvoylglucosamine reductase (339 aa).

Residues 19-189 enclose the FAD-binding PCMH-type domain; the sequence is VDVQARLFAE…LRVRFKLSRV (171 aa). Residue Arg-166 is part of the active site. Ser-239 serves as the catalytic Proton donor. The active site involves Glu-335.

The protein belongs to the MurB family. FAD is required as a cofactor.

It localises to the cytoplasm. The catalysed reaction is UDP-N-acetyl-alpha-D-muramate + NADP(+) = UDP-N-acetyl-3-O-(1-carboxyvinyl)-alpha-D-glucosamine + NADPH + H(+). It functions in the pathway cell wall biogenesis; peptidoglycan biosynthesis. In terms of biological role, cell wall formation. The chain is UDP-N-acetylenolpyruvoylglucosamine reductase from Pseudomonas savastanoi pv. phaseolicola (strain 1448A / Race 6) (Pseudomonas syringae pv. phaseolicola (strain 1448A / Race 6)).